The chain runs to 189 residues: Interferon alpha-C (189 aa).

Residues 1-23 (MAPAWSFRLALLLLSCNAICSLG) form the signal peptide. Disulfide bonds link cysteine 24/cysteine 122 and cysteine 52/cysteine 162.

The protein belongs to the alpha/beta interferon family.

It localises to the secreted. In terms of biological role, produced by macrophages, IFN-alpha have antiviral activities. Interferon stimulates the production of two enzymes: a protein kinase and an oligoadenylate synthetase. The sequence is that of Interferon alpha-C (IFNAC) from Bos taurus (Bovine).